Consider the following 74-residue polypeptide: Cytochrome c oxidase assembly factor 5 (74 aa).

The region spanning 27-65 is the CHCH domain; the sequence is ESDCVVQEGKSPRQCLKEGYCNSLKYAFFECKRSVLDNR. The Cx10C motif signature appears at 30–41; that stretch reads CVVQEGKSPRQC. Intrachain disulfides connect cysteine 30-cysteine 57 and cysteine 41-cysteine 47. Serine 37 is subject to Phosphoserine. Residues 47–57 carry the Cx9C motif motif; sequence CNSLKYAFFEC.

This sequence belongs to the PET191 family.

Functionally, involved in an early step of the mitochondrial complex IV assembly process. This Pongo abelii (Sumatran orangutan) protein is Cytochrome c oxidase assembly factor 5 (Coa5).